Here is a 235-residue protein sequence, read N- to C-terminus: Probable inactive serine protease 37 (235 aa).

A signal peptide spans 1-19; it reads MKFTFCLTVLAGTFFSAHS. In terms of domain architecture, Peptidase S1 spans 20 to 233; it reads SVQKDDPSPY…YVSWIESTTK (214 aa). Disulfide bonds link cysteine 40–cysteine 56, cysteine 131–cysteine 198, and cysteine 163–cysteine 177.

It belongs to the peptidase S1 family.

Its subcellular location is the cytoplasmic vesicle. It is found in the secretory vesicle. It localises to the acrosome. The protein localises to the secreted. Plays a role in male fertility. May have a role in sperm migration or binding to zona-intact eggs. Involved in the activation of the proacrosin/acrosin system. In Bos taurus (Bovine), this protein is Probable inactive serine protease 37.